Consider the following 1119-residue polypeptide: Leucine-rich repeats and immunoglobulin-like domains protein 3 (1119 aa).

Residues 1–24 (MSAPSLRARAAGLGLLLCAVLGRA) form the signal peptide. An LRRNT domain is found at 38–74 (PSGVAAERPCPTTCRCLGDLLDCSRKRLARLPEPLPS). 15 LRR repeats span residues 75 to 96 (WVARLDLSHNRLSFIKASSMSH), 99 to 120 (SLREVKLNNNELETIPNLGPVS), 122 to 142 (NITLLSLAGNRIVEILPEHLK), 146 to 167 (SLETLDLSSNNISELQTAFPAL), 168 to 189 (QLKYLYLNSNRVTSMEPGYFDN), 193 to 214 (TLLVLKLNRNRISAIPPKMFKL), 216 to 237 (QLQHLELNRNKIKNVDGLTFQG), 240 to 261 (ALKSLKMQRNGVTKLMDGAFWG), 264 to 285 (NMEILQLDHNNLTEITKGWLYG), 288 to 309 (MLQELHLSQNAINRISPDAWEF), 312 to 333 (KLSELDLTFNHLSRLDDSSFLG), 336 to 357 (LLNTLHIGNNRVSYIADCAFRG), 360 to 382 (SLKTLDLKNNEISWTIEDMNGAF), 387 to 408 (KLRRLILQGNRIRSITKKAFTG), and 411 to 432 (ALEHLDLSDNAIMSLQGNAFSQ). Asn122 and Asn156 each carry an N-linked (GlcNAc...) asparagine glycan. Residue Asn274 is glycosylated (N-linked (GlcNAc...) asparagine). Asn442, Asn469, and Asn515 each carry an N-linked (GlcNAc...) asparagine glycan. Positions 444–495 (SSLLCDCQLKWLPQWVAENNFQSFVNASCAHPQLLKGRSIFAVSPDGFVCDD) constitute an LRRCT domain. Ig-like C2-type domains follow at residues 499-598 (PQIT…AKLT), 603-692 (PSFT…ATLT), and 697-783 (PSFL…VRLS). Cystine bridges form between Cys520–Cys581 and Cys624–Cys676. N-linked (GlcNAc...) asparagine glycans are attached at residues Asn688 and Asn729. The cysteines at positions 718 and 767 are disulfide-linked. The chain crosses the membrane as a helical span at residues 810-830 (VVIIAVVCCVVGTSLVWVVII). N-linked (GlcNAc...) asparagine glycosylation is found at Asn905, Asn987, Asn999, and Asn1016. Residues 1073-1093 (SSPDLDSGSEEDGKERTDFQE) are disordered. Over residues 1083–1093 (EDGKERTDFQE) the composition is skewed to basic and acidic residues.

In terms of assembly, interacts with EGFR, ERBB2 and ERBB4 (in vitro). As to expression, widely expressed.

It localises to the cell membrane. Its subcellular location is the cytoplasmic vesicle membrane. In terms of biological role, may play a role in craniofacial and inner ear morphogenesis during embryonic development. May act within the otic vesicle epithelium to control formation of the lateral semicircular canal in the inner ear, possibly by restricting the expression of NTN1. The sequence is that of Leucine-rich repeats and immunoglobulin-like domains protein 3 (LRIG3) from Homo sapiens (Human).